The chain runs to 166 residues: Interferon gamma (166 aa).

The N-terminal stretch at 1 to 23 (MKYTSYFLALLLCGLLGFSGSYG) is a signal peptide. Q24 is modified (pyrrolidone carboxylic acid). N-linked (GlcNAc...) asparagine glycans are attached at residues N39 and N106.

It belongs to the type II (or gamma) interferon family. As to quaternary structure, homodimer. Interacts with IFNGR1 (via extracellular domain); this interaction promotes IFNGR1 dimerization. As to expression, released primarily from activated T lymphocytes.

It is found in the secreted. Type II interferon produced by immune cells such as T-cells and NK cells that plays crucial roles in antimicrobial, antiviral, and antitumor responses by activating effector immune cells and enhancing antigen presentation. Primarily signals through the JAK-STAT pathway after interaction with its receptor IFNGR1 to affect gene regulation. Upon IFNG binding, IFNGR1 intracellular domain opens out to allow association of downstream signaling components JAK2, JAK1 and STAT1, leading to STAT1 activation, nuclear translocation and transcription of IFNG-regulated genes. Many of the induced genes are transcription factors such as IRF1 that are able to further drive regulation of a next wave of transcription. Plays a role in class I antigen presentation pathway by inducing a replacement of catalytic proteasome subunits with immunoproteasome subunits. In turn, increases the quantity, quality, and repertoire of peptides for class I MHC loading. Increases the efficiency of peptide generation also by inducing the expression of activator PA28 that associates with the proteasome and alters its proteolytic cleavage preference. Up-regulates as well MHC II complexes on the cell surface by promoting expression of several key molecules such as cathepsins B/CTSB, H/CTSH, and L/CTSL. Participates in the regulation of hematopoietic stem cells during development and under homeostatic conditions by affecting their development, quiescence, and differentiation. The sequence is that of Interferon gamma (IFNG) from Bos taurus (Bovine).